We begin with the raw amino-acid sequence, 180 residues long: ADP-ribosylation factor-like protein 1 (180 aa).

Residue Gly-2 is the site of N-myristoyl glycine attachment. GTP is bound by residues 23 to 30 (GLDGAGKT), 66 to 70 (DLGGQ), and 125 to 128 (NKQD).

Belongs to the small GTPase superfamily. Arf family.

In terms of biological role, GTP-binding protein involved in protein trafficking; may modulate vesicle budding and uncoating within the Golgi apparatus. This is ADP-ribosylation factor-like protein 1 (Arl1) from Drosophila melanogaster (Fruit fly).